A 223-amino-acid chain; its full sequence is Urease accessory protein UreF (223 aa).

This sequence belongs to the UreF family. As to quaternary structure, ureD, UreF and UreG form a complex that acts as a GTP-hydrolysis-dependent molecular chaperone, activating the urease apoprotein by helping to assemble the nickel containing metallocenter of UreC. The UreE protein probably delivers the nickel.

The protein resides in the cytoplasm. In terms of biological role, required for maturation of urease via the functional incorporation of the urease nickel metallocenter. The polypeptide is Urease accessory protein UreF (Sinorhizobium medicae (strain WSM419) (Ensifer medicae)).